Consider the following 317-residue polypeptide: Heme A synthase (317 aa).

The Cytoplasmic portion of the chain corresponds to M1–K6. The helical transmembrane segment at W7–T27 threads the bilayer. At K28 to R62 the chain is on the extracellular side. The cysteines at positions 35 and 42 are disulfide-linked. The active site involves E58. H61 is a binding site for heme o. A helical transmembrane segment spans residues L63–I83. At G84–K90 the chain is on the cytoplasmic side. A helical membrane pass occupies residues F91–V111. Topologically, residues V112–A121 are extracellular. A helical transmembrane segment spans residues L122 to F142. H123 provides a ligand contact to heme o. Residues E143–M159 lie on the Cytoplasmic side of the membrane. The helical transmembrane segment at R160–V180 threads the bilayer. Topologically, residues R181–M211 are extracellular. C189 and C195 form a disulfide bridge. The helical transmembrane segment at G212 to V232 threads the bilayer. H213 is a heme b binding site. Topologically, residues R233–Y243 are cytoplasmic. The helical transmembrane segment at G244 to F264 threads the bilayer. At T265 to Y270 the chain is on the extracellular side. Residues I271–L291 traverse the membrane as a helical segment. A heme b-binding site is contributed by H275. Over L292–K317 the chain is Cytoplasmic.

Belongs to the COX15/CtaA family. Type 1 subfamily. Interacts with CtaB. Requires heme b as cofactor.

The protein resides in the cell membrane. The enzyme catalyses Fe(II)-heme o + 2 A + H2O = Fe(II)-heme a + 2 AH2. It participates in porphyrin-containing compound metabolism; heme A biosynthesis; heme A from heme O: step 1/1. Catalyzes the conversion of heme O to heme A by two successive hydroxylations of the methyl group at C8. The first hydroxylation forms heme I, the second hydroxylation results in an unstable dihydroxymethyl group, which spontaneously dehydrates, resulting in the formyl group of heme A. The protein is Heme A synthase of Geobacillus kaustophilus (strain HTA426).